Here is a 292-residue protein sequence, read N- to C-terminus: Protoheme IX farnesyltransferase (292 aa).

9 consecutive transmembrane segments (helical) span residues 13–33 (ILFG…QGHV), 35–55 (FLLL…GCVV), 84–104 (TALI…WFWV), 106–126 (PYSF…YSLW), 135–155 (TIIG…AVTH), 161–181 (ALLI…AIAI), 206–226 (VECL…YCFG), 231–251 (FFLL…IIGF), and 263–283 (LFLF…FTYQ).

This sequence belongs to the UbiA prenyltransferase family. Protoheme IX farnesyltransferase subfamily.

It is found in the cell inner membrane. The enzyme catalyses heme b + (2E,6E)-farnesyl diphosphate + H2O = Fe(II)-heme o + diphosphate. It functions in the pathway porphyrin-containing compound metabolism; heme O biosynthesis; heme O from protoheme: step 1/1. Its function is as follows. Converts heme B (protoheme IX) to heme O by substitution of the vinyl group on carbon 2 of heme B porphyrin ring with a hydroxyethyl farnesyl side group. This Acinetobacter baylyi (strain ATCC 33305 / BD413 / ADP1) protein is Protoheme IX farnesyltransferase.